Here is a 58-residue protein sequence, read N- to C-terminus: Bestoxin (58 aa).

The LCN-type CS-alpha/beta domain occupies 3-58; the sequence is VPGNYPLDKDGNTYTCLELGENKDCQKVCKLHGVQYGYCYAFSCWCKEYLDDKDSV. 3 disulfides stabilise this stretch: Cys-18-Cys-41, Cys-27-Cys-46, and Cys-31-Cys-48.

Expressed by the venom gland.

The protein resides in the secreted. Its function is as follows. Beta toxins bind voltage-independently at site-4 of sodium channels (Nav) and shift the voltage of activation toward more negative potentials thereby affecting sodium channel activation and promoting spontaneous and repetitive firing. In mice, causes intense writhing. This is Bestoxin from Parabuthus transvaalicus (Transvaal thick-tailed scorpion).